Consider the following 662-residue polypeptide: DNA ligase (662 aa).

NAD(+) contacts are provided by residues 31–35 (DSEYD), 79–80 (SL), and E119. K121 serves as the catalytic N6-AMP-lysine intermediate. NAD(+) is bound by residues R142, E176, K288, and K312. Zn(2+) contacts are provided by C405, C408, C421, and C427. The 80-residue stretch at 583-662 (NIEKKLDNLT…DELNSFLDNL (80 aa)) folds into the BRCT domain.

The protein belongs to the NAD-dependent DNA ligase family. LigA subfamily. The cofactor is Mg(2+). Requires Mn(2+) as cofactor.

The enzyme catalyses NAD(+) + (deoxyribonucleotide)n-3'-hydroxyl + 5'-phospho-(deoxyribonucleotide)m = (deoxyribonucleotide)n+m + AMP + beta-nicotinamide D-nucleotide.. Its function is as follows. DNA ligase that catalyzes the formation of phosphodiester linkages between 5'-phosphoryl and 3'-hydroxyl groups in double-stranded DNA using NAD as a coenzyme and as the energy source for the reaction. It is essential for DNA replication and repair of damaged DNA. The protein is DNA ligase of Finegoldia magna (strain ATCC 29328 / DSM 20472 / WAL 2508) (Peptostreptococcus magnus).